The chain runs to 148 residues: Large ribosomal subunit protein bL9 (148 aa).

The protein belongs to the bacterial ribosomal protein bL9 family.

Its function is as follows. Binds to the 23S rRNA. In Acinetobacter baumannii (strain AB307-0294), this protein is Large ribosomal subunit protein bL9.